The following is a 213-amino-acid chain: Holliday junction resolvase RecU (213 aa).

The Mg(2+) site is built by T98, D100, E113, and Q132.

This sequence belongs to the RecU family. Mg(2+) serves as cofactor.

The protein resides in the cytoplasm. The enzyme catalyses Endonucleolytic cleavage at a junction such as a reciprocal single-stranded crossover between two homologous DNA duplexes (Holliday junction).. In terms of biological role, endonuclease that resolves Holliday junction intermediates in genetic recombination. Cleaves mobile four-strand junctions by introducing symmetrical nicks in paired strands. Promotes annealing of linear ssDNA with homologous dsDNA. Required for DNA repair, homologous recombination and chromosome segregation. The polypeptide is Holliday junction resolvase RecU (Ligilactobacillus salivarius (strain UCC118) (Lactobacillus salivarius)).